We begin with the raw amino-acid sequence, 740 residues long: Polyribonucleotide nucleotidyltransferase (740 aa).

Mg(2+)-binding residues include aspartate 496 and aspartate 502. Residues 563–622 enclose the KH domain; the sequence is PAIIRTSIHPDKIRDIIGPGGKIIKKLVEETGADIDIEDDGRVFIAAVDREKGKRALEII. Positions 632–706 constitute an S1 motif domain; that stretch reads GKLYNGKVTR…QQGRLKLSKK (75 aa). Residues 707–740 are disordered; that stretch reads EAMRDMGLAPAESTSEQPEKRERRPFSRPKATKE. Residues 723–740 are compositionally biased toward basic and acidic residues; sequence QPEKRERRPFSRPKATKE.

Belongs to the polyribonucleotide nucleotidyltransferase family. Requires Mg(2+) as cofactor.

The protein resides in the cytoplasm. The catalysed reaction is RNA(n+1) + phosphate = RNA(n) + a ribonucleoside 5'-diphosphate. Its function is as follows. Involved in mRNA degradation. Catalyzes the phosphorolysis of single-stranded polyribonucleotides processively in the 3'- to 5'-direction. This Desulforamulus reducens (strain ATCC BAA-1160 / DSM 100696 / MI-1) (Desulfotomaculum reducens) protein is Polyribonucleotide nucleotidyltransferase.